Here is a 132-residue protein sequence, read N- to C-terminus: uncharacterized protein (132 aa).

A helical membrane pass occupies residues 105 to 125 (VHGYVVFWLSILCILIIIFVY).

It localises to the membrane. This is an uncharacterized protein from Methanocaldococcus jannaschii (strain ATCC 43067 / DSM 2661 / JAL-1 / JCM 10045 / NBRC 100440) (Methanococcus jannaschii).